We begin with the raw amino-acid sequence, 598 residues long: UvrABC system protein C (598 aa).

The region spanning 14-91 is the GIY-YIG domain; it reads DSPGCYLHKD…IQKNMPKYNI (78 aa). One can recognise a UVR domain in the interval 196 to 231; the sequence is DKIIEDLRSKMLAASEEMAFERAAEYRDLISGIATM.

The protein belongs to the UvrC family. Interacts with UvrB in an incision complex.

It localises to the cytoplasm. The UvrABC repair system catalyzes the recognition and processing of DNA lesions. UvrC both incises the 5' and 3' sides of the lesion. The N-terminal half is responsible for the 3' incision and the C-terminal half is responsible for the 5' incision. The sequence is that of UvrABC system protein C from Streptococcus pyogenes serotype M6 (strain ATCC BAA-946 / MGAS10394).